The following is a 280-amino-acid chain: Probable endonuclease 4 (280 aa).

Zn(2+) contacts are provided by His-69, His-109, Glu-145, Asp-179, His-182, His-216, Asp-229, His-231, and Glu-261.

The protein belongs to the AP endonuclease 2 family. Zn(2+) serves as cofactor.

It carries out the reaction Endonucleolytic cleavage to 5'-phosphooligonucleotide end-products.. Its function is as follows. Endonuclease IV plays a role in DNA repair. It cleaves phosphodiester bonds at apurinic or apyrimidinic (AP) sites, generating a 3'-hydroxyl group and a 5'-terminal sugar phosphate. The protein is Probable endonuclease 4 of Erwinia tasmaniensis (strain DSM 17950 / CFBP 7177 / CIP 109463 / NCPPB 4357 / Et1/99).